The sequence spans 296 residues: NAD kinase (296 aa).

Asp-72 serves as the catalytic Proton acceptor. NAD(+) is bound by residues 72 to 73 (DG), 146 to 147 (ND), Arg-157, Arg-174, Asp-176, 187 to 192 (TAYALS), and Gln-247.

Belongs to the NAD kinase family. A divalent metal cation is required as a cofactor.

It localises to the cytoplasm. It carries out the reaction NAD(+) + ATP = ADP + NADP(+) + H(+). In terms of biological role, involved in the regulation of the intracellular balance of NAD and NADP, and is a key enzyme in the biosynthesis of NADP. Catalyzes specifically the phosphorylation on 2'-hydroxyl of the adenosine moiety of NAD to yield NADP. The polypeptide is NAD kinase (Hahella chejuensis (strain KCTC 2396)).